The chain runs to 177 residues: NADH-quinone oxidoreductase subunit B (177 aa).

[4Fe-4S] cluster is bound by residues C56, C57, C121, and C151.

It belongs to the complex I 20 kDa subunit family. In terms of assembly, NDH-1 is composed of 14 different subunits. Subunits NuoB, C, D, E, F, and G constitute the peripheral sector of the complex. It depends on [4Fe-4S] cluster as a cofactor.

It is found in the cell inner membrane. It catalyses the reaction a quinone + NADH + 5 H(+)(in) = a quinol + NAD(+) + 4 H(+)(out). In terms of biological role, NDH-1 shuttles electrons from NADH, via FMN and iron-sulfur (Fe-S) centers, to quinones in the respiratory chain. Couples the redox reaction to proton translocation (for every two electrons transferred, four hydrogen ions are translocated across the cytoplasmic membrane), and thus conserves the redox energy in a proton gradient. The protein is NADH-quinone oxidoreductase subunit B of Sphingopyxis alaskensis (strain DSM 13593 / LMG 18877 / RB2256) (Sphingomonas alaskensis).